Reading from the N-terminus, the 449-residue chain is Tubulin alpha-8 chain (449 aa).

Positions 1–4 (MREC) match the MREC motif motif. The GTP site is built by glutamine 11, glutamate 71, serine 140, glycine 144, threonine 145, threonine 179, asparagine 206, and asparagine 228. Residue glutamate 71 coordinates Mg(2+). Glutamate 254 is a catalytic residue.

Belongs to the tubulin family. As to quaternary structure, dimer of alpha and beta chains. A typical microtubule is a hollow water-filled tube with an outer diameter of 25 nm and an inner diameter of 15 nM. Alpha-beta heterodimers associate head-to-tail to form protofilaments running lengthwise along the microtubule wall with the beta-tubulin subunit facing the microtubule plus end conferring a structural polarity. Microtubules usually have 13 protofilaments but different protofilament numbers can be found in some organisms and specialized cells. Mg(2+) is required as a cofactor. Post-translationally, some glutamate residues at the C-terminus are polyglycylated, resulting in polyglycine chains on the gamma-carboxyl group. Glycylation is mainly limited to tubulin incorporated into axonemes (cilia and flagella) whereas glutamylation is prevalent in neuronal cells, centrioles, axonemes, and the mitotic spindle. Both modifications can coexist on the same protein on adjacent residues, and lowering polyglycylation levels increases polyglutamylation, and reciprocally. Cilia and flagella glycylation is required for their stability and maintenance. Flagella glycylation controls sperm motility. Some glutamate residues at the C-terminus are polyglutamylated, resulting in polyglutamate chains on the gamma-carboxyl group. Polyglutamylation plays a key role in microtubule severing by spastin (SPAST). SPAST preferentially recognizes and acts on microtubules decorated with short polyglutamate tails: severing activity by SPAST increases as the number of glutamates per tubulin rises from one to eight, but decreases beyond this glutamylation threshold. Glutamylation is also involved in cilia motility. In terms of processing, the C-terminal phenylalanine residue is cleaved by MATCAP1/KIAA0895L.

Its subcellular location is the cytoplasm. The protein localises to the cytoskeleton. The enzyme catalyses GTP + H2O = GDP + phosphate + H(+). Tubulin is the major constituent of microtubules, a cylinder consisting of laterally associated linear protofilaments composed of alpha- and beta-tubulin heterodimers. Microtubules grow by the addition of GTP-tubulin dimers to the microtubule end, where a stabilizing cap forms. Below the cap, tubulin dimers are in GDP-bound state, owing to GTPase activity of alpha-tubulin. The sequence is that of Tubulin alpha-8 chain (Tuba8) from Rattus norvegicus (Rat).